The sequence spans 476 residues: MAMETTSQDSQVIMGRYKLGRLLGRGTFAKVYKAYKLATGEAVAIKVFDKEAVQRSGTVEQVKREVDVMRRVHHRHVIRLHEVMATRSRIYFVMEYASGGELFTRLSRSPRFPEPVARRYFQQLITAVEFCHSRGVYHRDLKPENLLLDARGDLKVTDFGLSALDGGLRGDGLLHTTCGTPAYVAPEVLLKRGYDGAKADIWSCGVILFVLLAGYLPFNETNLVILYRNITESNYRCPPWFSVEARKLLARLLDPNPKTRITISKIMDRPWFQQATCPLGDMSLVASAPSVLLARKEASQQHDDEEDDGFAREKKKRSNVIMSSPVIDVRPSSMNAFDIISRSRGLDLSKMFDAEERRSEARFSTRETTTAIVSKLEEIAEAGRFSFKLKEKGRVELEGSQDGRKGALAIEAEIFKVAPEVHVVEVRKTGGDSPDFRDFYKQELKPSLGDMVWAWQGGDSPPLVPAAGRRPITKRS.

The Protein kinase domain occupies 17-272 (YKLGRLLGRG…ISKIMDRPWF (256 aa)). ATP-binding positions include 23–31 (LGRGTFAKV) and Lys46. The active-site Proton acceptor is Asp140. The activation loop stretch occupies residues 158-187 (DFGLSALDGGLRGDGLLHTTCGTPAYVAPE). Positions 296–315 (KEASQQHDDEEDDGFAREKK) are disordered. The region spanning 299–353 (SQQHDDEEDDGFAREKKKRSNVIMSSPVIDVRPSSMNAFDIISRSRGLDLSKMFD) is the NAF domain. Residues 358–387 (RSEARFSTRETTTAIVSKLEEIAEAGRFSF) are PPI.

It belongs to the protein kinase superfamily. CAMK Ser/Thr protein kinase family. SNF1 subfamily. Mn(2+) serves as cofactor.

The enzyme catalyses L-seryl-[protein] + ATP = O-phospho-L-seryl-[protein] + ADP + H(+). It catalyses the reaction L-threonyl-[protein] + ATP = O-phospho-L-threonyl-[protein] + ADP + H(+). Functionally, CIPK serine-threonine protein kinases interact with CBL proteins. Binding of a CBL protein to the regulatory NAF domain of CIPK protein lead to the activation of the kinase in a calcium-dependent manner. The sequence is that of CBL-interacting protein kinase 30 (CIPK30) from Oryza sativa subsp. japonica (Rice).